The sequence spans 344 residues: Putative cyclin-Y-like protein 3 (344 aa).

Residues 40–170 enclose the Cyclin N-terminal domain; it reads ERYANRSLAI…FLELLEFNIH (131 aa).

The protein belongs to the cyclin family. Cyclin Y subfamily.

The protein is Putative cyclin-Y-like protein 3 (CCNYL3) of Homo sapiens (Human).